A 364-amino-acid polypeptide reads, in one-letter code: 3-isopropylmalate dehydrogenase (364 aa).

79 to 92 (GSKWDHLPEIEKPE) is an NAD(+) binding site. The substrate site is built by R100, R110, R139, and D227. 3 residues coordinate Mg(2+): D227, D251, and D255. 285-297 (GSAPNIAGKTIAN) is a binding site for NAD(+).

Belongs to the isocitrate and isopropylmalate dehydrogenases family. LeuB type 1 subfamily. In terms of assembly, homodimer. The cofactor is Mg(2+). It depends on Mn(2+) as a cofactor.

It localises to the cytoplasm. The catalysed reaction is (2R,3S)-3-isopropylmalate + NAD(+) = 4-methyl-2-oxopentanoate + CO2 + NADH. It functions in the pathway amino-acid biosynthesis; L-leucine biosynthesis; L-leucine from 3-methyl-2-oxobutanoate: step 3/4. In terms of biological role, catalyzes the oxidation of 3-carboxy-2-hydroxy-4-methylpentanoate (3-isopropylmalate) to 3-carboxy-4-methyl-2-oxopentanoate. The product decarboxylates to 4-methyl-2 oxopentanoate. In Buchnera aphidicola subsp. Thelaxes suberi, this protein is 3-isopropylmalate dehydrogenase.